We begin with the raw amino-acid sequence, 98 residues long: Plastocyanin (98 aa).

Residues 1 to 98 (DVTVKLGADS…AGMKGTITVQ (98 aa)) enclose the Plastocyanin-like domain. Cu cation contacts are provided by histidine 38, cysteine 83, histidine 86, and methionine 91.

Belongs to the plastocyanin family. It depends on Cu(2+) as a cofactor.

The protein resides in the plastid. It localises to the chloroplast thylakoid membrane. In terms of biological role, participates in electron transfer between P700 and the cytochrome b6-f complex in photosystem I. This chain is Plastocyanin (petE), found in Scenedesmus fuscus (Green alga).